Consider the following 818-residue polypeptide: Glycerol-3-phosphate acyltransferase (818 aa).

Positions 305–310 (CHRSHM) match the HXXXXD motif motif.

Belongs to the GPAT/DAPAT family.

The protein resides in the cell inner membrane. It carries out the reaction sn-glycerol 3-phosphate + an acyl-CoA = a 1-acyl-sn-glycero-3-phosphate + CoA. It participates in phospholipid metabolism; CDP-diacylglycerol biosynthesis; CDP-diacylglycerol from sn-glycerol 3-phosphate: step 1/3. This is Glycerol-3-phosphate acyltransferase from Edwardsiella ictaluri (strain 93-146).